The sequence spans 633 residues: Threonine--tRNA ligase (633 aa).

A TGS domain is found at 1-61; sequence MINIHFSNNL…IENCTFEVIT (61 aa). Residues 242-533 form a catalytic region; sequence DHRKIGRELE…LIEHHSGKFP (292 aa). Residues C333, H384, and H510 each contribute to the Zn(2+) site.

This sequence belongs to the class-II aminoacyl-tRNA synthetase family. As to quaternary structure, homodimer. It depends on Zn(2+) as a cofactor.

Its subcellular location is the cytoplasm. It catalyses the reaction tRNA(Thr) + L-threonine + ATP = L-threonyl-tRNA(Thr) + AMP + diphosphate + H(+). Its function is as follows. Catalyzes the attachment of threonine to tRNA(Thr) in a two-step reaction: L-threonine is first activated by ATP to form Thr-AMP and then transferred to the acceptor end of tRNA(Thr). Also edits incorrectly charged L-seryl-tRNA(Thr). The protein is Threonine--tRNA ligase of Ehrlichia chaffeensis (strain ATCC CRL-10679 / Arkansas).